The chain runs to 164 residues: Inner membrane assembly complex subunit 17 (164 aa).

A mitochondrion-targeting transit peptide spans 1-28 (MIKTAKISTLRLAITRNARNLSFTTLVR). Residues 29–97 (SPEVDNSKIK…NEVPLKRFTR (69 aa)) are Mitochondrial matrix-facing. The chain crosses the membrane as a helical span at residues 98–118 (PLWIFILMASTFYLGAHLVWW). The Mitochondrial intermembrane segment spans residues 119-164 (KLAYEKKEVELKHKVDSLETTLKDVMKEKATGPTPCNNKKSWYKFW). The stretch at 121 to 149 (AYEKKEVELKHKVDSLETTLKDVMKEKAT) forms a coiled coil.

Belongs to the INA17 family. As to quaternary structure, component of the inner membrane assembly (INA) complex, composed of INA17 and INA22. Interacts with a subset of F(1)F(0)-ATP synthase subunits of the F(1)-domain and the peripheral stalk.

It localises to the mitochondrion inner membrane. Its function is as follows. Component of the INA complex (INAC) that promotes the biogenesis of mitochondrial F(1)F(0)-ATP synthase. INAC facilitates the assembly of the peripheral stalk and promotes the assembly of the catalytic F(1)-domain with the membrane-embedded F(0)-domain. The sequence is that of Inner membrane assembly complex subunit 17 from Candida glabrata (strain ATCC 2001 / BCRC 20586 / JCM 3761 / NBRC 0622 / NRRL Y-65 / CBS 138) (Yeast).